Here is a 202-residue protein sequence, read N- to C-terminus: LexA repressor (202 aa).

Residues 28-48 constitute a DNA-binding region (H-T-H motif); it reads RAEIAQRLGFRSPNAAEEHLK. Active-site for autocatalytic cleavage activity residues include Ser119 and Lys156.

The protein belongs to the peptidase S24 family. In terms of assembly, homodimer.

The catalysed reaction is Hydrolysis of Ala-|-Gly bond in repressor LexA.. Its function is as follows. Represses a number of genes involved in the response to DNA damage (SOS response), including recA and lexA. Binds to the 16 bp palindromic sequence 5'-CTGTATATATATACAG-3'. In the presence of single-stranded DNA, RecA interacts with LexA causing an autocatalytic cleavage which disrupts the DNA-binding part of LexA, leading to derepression of the SOS regulon and eventually DNA repair. This is LexA repressor from Escherichia fergusonii (strain ATCC 35469 / DSM 13698 / CCUG 18766 / IAM 14443 / JCM 21226 / LMG 7866 / NBRC 102419 / NCTC 12128 / CDC 0568-73).